Here is a 429-residue protein sequence, read N- to C-terminus: 3-phosphoshikimate 1-carboxyvinyltransferase (429 aa).

3 residues coordinate 3-phosphoshikimate: Lys20, Ser21, and Arg25. Lys20 lines the phosphoenolpyruvate pocket. Phosphoenolpyruvate contacts are provided by Gly89 and Arg118. 3-phosphoshikimate contacts are provided by Ser164, Ser165, Gln166, Ser192, Asp311, and Lys338. Gln166 contributes to the phosphoenolpyruvate binding site. The Proton acceptor role is filled by Asp311. Phosphoenolpyruvate is bound by residues Arg342 and Arg384.

Belongs to the EPSP synthase family. As to quaternary structure, monomer.

It is found in the cytoplasm. It carries out the reaction 3-phosphoshikimate + phosphoenolpyruvate = 5-O-(1-carboxyvinyl)-3-phosphoshikimate + phosphate. It functions in the pathway metabolic intermediate biosynthesis; chorismate biosynthesis. In terms of biological role, catalyzes the transfer of the enolpyruvyl moiety of phosphoenolpyruvate (PEP) to the 5-hydroxyl of shikimate-3-phosphate (S3P) to produce enolpyruvyl shikimate-3-phosphate and inorganic phosphate. The protein is 3-phosphoshikimate 1-carboxyvinyltransferase of Methanococcus maripaludis (strain C6 / ATCC BAA-1332).